The chain runs to 304 residues: GS homeobox 2 (304 aa).

The tract at residues 116–151 (AQFCPRVNHAHHHHHPPQHHHHHHQPQQPGSAAAAA) is disordered. The span at 123 to 140 (NHAHHHHHPPQHHHHHHQ) shows a compositional bias: basic residues. Positions 141-151 (PQQPGSAAAAA) are enriched in low complexity. The homeobox DNA-binding region spans 202–261 (GKRMRTAFTSTQLLELEREFSSNMYLSRLRRIEIATYLNLSEKQVKIWFQNRRVKHKKEG). The tract at residues 283–304 (RSEDEDSLSPASANDDKEISPL) is disordered.

Belongs to the Antp homeobox family.

The protein localises to the nucleus. Its subcellular location is the cytoplasm. Transcription factor that binds 5'-CNAATTAG-3' DNA sequence and regulates the expression of numerous genes including genes important for brain development. During telencephalic development, causes ventralization of pallial progenitors and, depending on the developmental stage, specifies different neuronal fates. At early stages, necessary and sufficient to correctly specify the ventral lateral ganglionic eminence (LGE) and its major derivatives, the striatal projection neurons. At later stages, may specify LGE progenitors toward dorsal LGE fates, including olfactory bulb interneurons. The chain is GS homeobox 2 (GSX2) from Homo sapiens (Human).